A 433-amino-acid chain; its full sequence is Small ribosomal subunit biogenesis GTPase RsgA 1, mitochondrial (433 aa).

Residues 1–20 are disordered; that stretch reads MLRAKHIGKNYSSSLSPVLS. Positions 113–291 constitute a CP-type G domain; sequence SEILDPPVAN…LADTPGFNQP (179 aa). 212–220 serves as a coordination point for GTP; the sequence is GPSGVGKSS. Zn(2+)-binding residues include Cys-317, Cys-322, His-324, and Cys-330.

Belongs to the TRAFAC class YlqF/YawG GTPase family. RsgA subfamily. Monomer. Associates with 30S ribosomal subunit, binds 16S rRNA. Zn(2+) serves as cofactor.

The protein localises to the mitochondrion. Functionally, one of several proteins that assist in the late maturation steps of the functional core of the 30S ribosomal subunit. Helps release RbfA from mature subunits. May play a role in the assembly of ribosomal proteins into the subunit. Circularly permuted GTPase that catalyzes slow GTP hydrolysis, GTPase activity is stimulated by the 30S ribosomal subunit. Required for embryo development. The protein is Small ribosomal subunit biogenesis GTPase RsgA 1, mitochondrial of Arabidopsis thaliana (Mouse-ear cress).